Here is a 190-residue protein sequence, read N- to C-terminus: Inosine triphosphate pyrophosphatase (190 aa).

ITP is bound at residue T8–K13. E37 contacts Mg(2+). ITP-binding positions include K49, D65 to T66, K82, F140 to D143, K163, and H168 to R169.

It belongs to the HAM1 NTPase family. As to quaternary structure, homodimer. Requires Mg(2+) as cofactor. It depends on Mn(2+) as a cofactor.

The protein resides in the cytoplasm. It localises to the nucleus. The enzyme catalyses ITP + H2O = IMP + diphosphate + H(+). It catalyses the reaction dITP + H2O = dIMP + diphosphate + H(+). The catalysed reaction is XTP + H2O = XMP + diphosphate + H(+). Pyrophosphatase that hydrolyzes non-canonical purine nucleotides such as inosine triphosphate (ITP), deoxyinosine triphosphate (dITP) or xanthosine 5'-triphosphate (XTP) to their respective monophosphate derivatives. The enzyme does not distinguish between the deoxy- and ribose forms. Probably excludes non-canonical purines from RNA and DNA precursor pools, thus preventing their incorporation into RNA and DNA and avoiding chromosomal lesions. The polypeptide is Inosine triphosphate pyrophosphatase (Batrachochytrium dendrobatidis (strain JAM81 / FGSC 10211) (Frog chytrid fungus)).